Reading from the N-terminus, the 267-residue chain is RWD domain-containing protein 3 (267 aa).

The RWD domain maps to 7-114; that stretch reads EELSVLAAIF…LWIQQNLRHI (108 aa). Interaction with UBE2I/UBC9 stretches follow at residues 13-15 and 100-102; these read AAI and VHE.

As to quaternary structure, isoform 1 and isoform 2 interact with UBE2I/UBC9. Isoform 1 shows a greater interaction with NFKBIA and HIF1A as compared to isoform 2. Isoform 2 interacts with NCOA2 and NR3C1. As to expression, isoform 1 and isoform 2 are expressed in glioma tumors (at protein level). Expressed in a wide number of tissues with highest expression in cerebellum, pituitary, heart, kidney, liver, stomach, pancreas, prostate and spleen. Low levels in thalamus, spinal cord, esophagus, thymus, lung and peripheral blood leukocytes. A higher level expression seen in pituitary tumors as compared to the pituitary gland.

The protein resides in the nucleus. It localises to the cytoplasm. Functionally, enhancer of SUMO conjugation. Via its interaction with UBE2I/UBC9, increases SUMO conjugation to proteins by promoting the binding of E1 and E2 enzymes, thioester linkage between SUMO and UBE2I/UBC9 and transfer of SUMO to specific target proteins which include HIF1A, PIAS, NFKBIA, NR3C1 and TOP1. Isoform 1 and isoform 2 positively regulate the NF-kappa-B signaling pathway by enhancing the sumoylation of NF-kappa-B inhibitor alpha (NFKBIA), promoting its stabilization which consequently leads to an increased inhibition of NF-kappa-B transcriptional activity. Isoform 1 and isoform 2 negatively regulate the hypoxia-inducible factor-1 alpha (HIF1A) signaling pathway by increasing the sumoylation of HIF1A, promoting its stabilization, transcriptional activity and the expression of its target gene VEGFA during hypoxia. Isoform 2 promotes the sumoylation and transcriptional activity of the glucocorticoid receptor NR3C1 and enhances the interaction of SUMO1 and NR3C1 with UBE2I/UBC9. Has no effect on ubiquitination. This is RWD domain-containing protein 3 (RWDD3) from Homo sapiens (Human).